A 121-amino-acid polypeptide reads, in one-letter code: Large ribosomal subunit protein eL18 (121 aa).

The protein belongs to the eukaryotic ribosomal protein eL18 family.

In Methanocaldococcus jannaschii (strain ATCC 43067 / DSM 2661 / JAL-1 / JCM 10045 / NBRC 100440) (Methanococcus jannaschii), this protein is Large ribosomal subunit protein eL18.